A 226-amino-acid chain; its full sequence is ATP-dependent dethiobiotin synthetase BioD (226 aa).

12 to 17 contacts ATP; it reads GVGKTV. Threonine 16 contacts Mg(2+). The active site involves lysine 37. Threonine 41 contributes to the substrate binding site. ATP is bound by residues aspartate 49, 108–111, 169–170, and 197–199; these read EGAG, GS, and PAG. 2 residues coordinate Mg(2+): aspartate 49 and glutamate 108.

This sequence belongs to the dethiobiotin synthetase family. In terms of assembly, homodimer. Requires Mg(2+) as cofactor.

Its subcellular location is the cytoplasm. The enzyme catalyses (7R,8S)-7,8-diammoniononanoate + CO2 + ATP = (4R,5S)-dethiobiotin + ADP + phosphate + 3 H(+). Its pathway is cofactor biosynthesis; biotin biosynthesis; biotin from 7,8-diaminononanoate: step 1/2. Functionally, catalyzes a mechanistically unusual reaction, the ATP-dependent insertion of CO2 between the N7 and N8 nitrogen atoms of 7,8-diaminopelargonic acid (DAPA, also called 7,8-diammoniononanoate) to form a ureido ring. This Mycobacterium leprae (strain Br4923) protein is ATP-dependent dethiobiotin synthetase BioD.